Consider the following 161-residue polypeptide: Small ribosomal subunit protein uS9 (161 aa).

A compositionally biased stretch (polar residues) spans 1-21 (MATLQSLADLNRANTQTSNPE). The disordered stretch occupies residues 1–25 (MATLQSLADLNRANTQTSNPENEAP).

Belongs to the universal ribosomal protein uS9 family.

The sequence is that of Small ribosomal subunit protein uS9 from Methylorubrum extorquens (strain CM4 / NCIMB 13688) (Methylobacterium extorquens).